The primary structure comprises 84 residues: Molybdopterin synthase sulfur carrier subunit (84 aa).

Residue Gly-84 is modified to 1-thioglycine; alternate. The residue at position 84 (Gly-84) is a Glycyl adenylate; alternate.

Belongs to the MoaD family. MOCS2A subfamily. Heterotetramer; composed of 2 small (MOCS2A) and 2 large (MOCS2B) subunits. C-terminal thiocarboxylation occurs in 2 steps, it is first acyl-adenylated (-COAMP) via the hesA/moeB/thiF part of MOCS3, then thiocarboxylated (-COSH) via the rhodanese domain of MOCS3.

Its subcellular location is the cytoplasm. The protein operates within cofactor biosynthesis; molybdopterin biosynthesis. Functionally, acts as a sulfur carrier required for molybdopterin biosynthesis. Component of the molybdopterin synthase complex that catalyzes the conversion of precursor Z into molybdopterin by mediating the incorporation of 2 sulfur atoms into precursor Z to generate a dithiolene group. In the complex, serves as sulfur donor by being thiocarboxylated (-COSH) at its C-terminus by MOCS3. After interaction with MOCS2B, the sulfur is then transferred to precursor Z to form molybdopterin. This Caenorhabditis elegans protein is Molybdopterin synthase sulfur carrier subunit.